Reading from the N-terminus, the 2528-residue chain is Highly reducing polyketide synthase pspA (2528 aa).

A disordered region spans residues 1-53 (MLAQDVEFVDLPPPEATAGAATTDNETSSFNSNPVPTPSEASSIGPPHQLPVP). Residues 24 to 42 (DNETSSFNSNPVPTPSEAS) are compositionally biased toward polar residues. A Ketosynthase family 3 (KS3) domain is found at 63-483 (VEPMAICGMA…GSNAHVLLGS (421 aa)). Active-site for beta-ketoacyl synthase activity residues include Cys-235, His-371, and His-406. The interval 590-909 (TFTGQGAQWA…HKDLLKAVGE (320 aa)) is malonyl-CoA:ACP transacylase (MAT) domain. Residues 961 to 1089 (HDILGSRVLE…GQVCAGSDRE (129 aa)) form an N-terminal hotdog fold region. Residues 961-1230 (HDILGSRVLE…VSNGHVTIDI (270 aa)) are dehydratase (DH) domain. One can recognise a PKS/mFAS DH domain in the interval 961-1244 (HDILGSRVLE…MSAIGDAADA (284 aa)). His-993 serves as the catalytic Proton acceptor; for dehydratase activity. Residues 1099 to 1244 (PRQLSRRGWY…MSAIGDAADA (146 aa)) form a C-terminal hotdog fold region. The active-site Proton donor; for dehydratase activity is Asp-1160. A methyltransferase (CMet) domain region spans residues 1409 to 1587 (VFLELLAHRK…GFSGINLVSH (179 aa)). An enoyl reductase (ER) (ER) domain region spans residues 1803–2119 (GLVDTLCWKS…RGQHIGKIVI (317 aa)). Positions 2143 to 2322 (RAYLFVGGLG…ASTVNIGVIQ (180 aa)) are ketoreductase (KR) domain. The region spanning 2447-2525 (ETAELLAGEI…DLGVLAQKKL (79 aa)) is the Carrier domain. At Ser-2485 the chain carries O-(pantetheine 4'-phosphoryl)serine.

It carries out the reaction 9 malonyl-CoA + acetyl-CoA + S-adenosyl-L-methionine + 13 NADPH + 20 H(+) = soppiline A + S-adenosyl-L-homocysteine + 9 CO2 + 13 NADP(+) + 10 CoA + 7 H2O. It functions in the pathway secondary metabolite biosynthesis. Highly reducing polyketide synthase; part of the gene cluster that mediates the biosynthesis of the alkylresorcinols called soppilines. The biosynthesis starts with the HR-PKS pspA-catalyzed carbon chain assembly through nine chain elongation cycles, using acetyl CoA and malonyl CoA as a starter and extender units, respectively, to produce the polyketide soppiline A. In the first round, the KR, DH, and CMeT domains work to produce 2-methyl-2-butenyl thioester. In rounds 2 to 5, the KR, DH, and ER domains fully catalyze the reduction of the elongated beta-ketothioester, resulting in the insertion of eight methylene units. The unusual Z,E,Z-triene motif is likely constructed during rounds 6 to 8. Typically, the DH domain introduces a double bond at an alpha,beta-position of an elongated polyketide chain, with the dehydration of a beta-hydroxy group. The last extension cycle would be carried out with L-oriented beta-ketoreduction by the KR domain to produce beta-hydroxy carboxylic acid soppiline A. The type III PKS pspB intercepts the elongated polyketide chain at round 8 from the HR-PKS pspA, followed by a tri-keto extension and decarboxylative aldol cyclization to produce 1,3,5-trisubstituted alkylresorcinol soppiline B. Subsequently, the cytochrome P450 monooxygenase pspC catalyzes three-step oxidations at the C-4 methyl group to carboxylic acid to yield soppiline C. This is Highly reducing polyketide synthase pspA from Penicillium soppii.